The chain runs to 945 residues: Valine--tRNA ligase (945 aa).

The 'HIGH' region motif lies at 42–52 (PNVTGTLHMGH). A 'KMSKS' region motif is present at residues 552-556 (KMSKS). Lys-555 contributes to the ATP binding site. Residues 879–945 (DKAAETARLS…VQNQLAKLKD (67 aa)) adopt a coiled-coil conformation.

This sequence belongs to the class-I aminoacyl-tRNA synthetase family. ValS type 1 subfamily. In terms of assembly, monomer.

It localises to the cytoplasm. It carries out the reaction tRNA(Val) + L-valine + ATP = L-valyl-tRNA(Val) + AMP + diphosphate. Its function is as follows. Catalyzes the attachment of valine to tRNA(Val). As ValRS can inadvertently accommodate and process structurally similar amino acids such as threonine, to avoid such errors, it has a 'posttransfer' editing activity that hydrolyzes mischarged Thr-tRNA(Val) in a tRNA-dependent manner. In Neisseria meningitidis serogroup B (strain ATCC BAA-335 / MC58), this protein is Valine--tRNA ligase.